A 2131-amino-acid chain; its full sequence is Sodium channel protein para (2131 aa).

Topologically, residues 1–148 are cytoplasmic; that stretch reads MTEDSDSISE…FNPIRRVAIY (148 aa). Residues 35–48 show a composition bias toward basic and acidic residues; the sequence is HEKQKELERKRAEG. The tract at residues 35 to 84 is disordered; the sequence is HEKQKELERKRAEGEVPQYGRKKKQKEIRYDDEDEDEGPQPDPTLEQGVP. Acidic residues predominate over residues 64-73; it reads YDDEDEDEGP. The I repeat unit spans residues 134–467; it reads WMLDPFNPIR…AAKAAKLEER (334 aa). The helical transmembrane segment at 149-172 threads the bilayer; sequence ILVHPLFSLFIITTILVNCILMIM. Topologically, residues 173-180 are extracellular; it reads PTTPTVES. Residues 181 to 199 form a helical membrane-spanning segment; it reads TEVIFTGIYTFESAVKVMA. Over 200 to 212 the chain is Cytoplasmic; sequence RGFILCPFTYLRD. A helical transmembrane segment spans residues 213 to 231; that stretch reads AWNWLDFVVIALAYVTMGI. Residues 232 to 237 are Extracellular-facing; the sequence is DLGNLA. A helical; Voltage-sensor transmembrane segment spans residues 238–257; it reads ALRTFRVLRALKTVAIVPGL. The Cytoplasmic segment spans residues 258–273; it reads KTIVGAVIESVKNLRD. A helical transmembrane segment spans residues 274–297; it reads VIILTMFSLSVFALMGLQIYMGVL. Residues 298–373 lie on the Extracellular side of the membrane; the sequence is TQKCIKKFPL…PNYGYTSFDS (76 aa). An intrachain disulfide couples Cys-301 to Cys-350. 3 N-linked (GlcNAc...) asparagine glycosylation sites follow: Asn-313, Asn-325, and Asn-343. Residues 374 to 398 constitute an intramembrane region (pore-forming); it reads FGWAFLSAFRLMTQDFWEDLYQLVL. Topologically, residues 399–405 are extracellular; the sequence is RAAGPWH. A helical transmembrane segment spans residues 406-427; that stretch reads MLFFIVIIFLGSFYLVNLILAI. At 428 to 812 the chain is on the cytoplasmic side; sequence VAMSYDELQK…VWLKFQEWVS (385 aa). Phosphoserine; by PKA is present on residues Ser-553 and Ser-570. Disordered regions lie at residues 553-572 and 671-691; these read STTSLSLPGSPFNIRRGSRS and KESKLRNRNTRNQSVGATNGG. A compositionally biased stretch (polar residues) spans 680-691; sequence TRNQSVGATNGG. One copy of the II repeat lies at 799 to 1069; sequence DCCWVWLKFQ…IAEAFNRIGR (271 aa). A helical membrane pass occupies residues 813–837; that stretch reads LIVFDPFVELFITLCIVVNTMFMAM. Residues 838-848 are Extracellular-facing; it reads DHHDMNKEMER. Residues 849-873 form a helical membrane-spanning segment; sequence VLKSGNYFFTATFAIEATMKLMAMS. The Cytoplasmic segment spans residues 874-880; it reads PKYYFQE. A helical transmembrane segment spans residues 881 to 900; sequence GWNIFDFIIVALSLLELGLE. Residues 901–906 are Extracellular-facing; that stretch reads GVQGLS. The helical; Voltage-sensor transmembrane segment at 907 to 926 threads the bilayer; sequence VLRSFRLLRVFKLAKSWPTL. Over 927-941 the chain is Cytoplasmic; that stretch reads NLLISIMGRTMGALG. Residues 942–963 traverse the membrane as a helical segment; that stretch reads NLTFVLCIIIFIFAVMGMQLFG. Residues 964-985 lie on the Extracellular side of the membrane; it reads KNYHDHKDRFPDGDLPRWNFTD. N-linked (GlcNAc...) asparagine glycosylation is present at Asn-982. Positions 986-1006 form an intramembrane region, pore-forming; the sequence is FMHSFMIVFRVLCGEWIESMW. Over 1007-1013 the chain is Extracellular; that stretch reads DCMYVGD. Cys-1008 and Cys-1016 are joined by a disulfide. The chain crosses the membrane as a helical span at residues 1014 to 1041; that stretch reads VSCIPFFLATVVIGNLVVLNLFLALLLS. Topologically, residues 1042 to 1296 are cytoplasmic; the sequence is NFGSSSLSAP…WGNLRLKTFQ (255 aa). The interval 1166-1240 is disordered; it reads DMKNNKPKKS…LDEEGECEEG (75 aa). The segment covering 1177–1194 has biased composition (polar residues); sequence YLNNATDDDTASINSYGS. Over residues 1199 to 1225 the composition is skewed to basic and acidic residues; sequence PFKDESHKGSAETMEGEEKRDASKEDL. Residues 1226 to 1240 are compositionally biased toward acidic residues; it reads GLDEELDEEGECEEG. One copy of the III repeat lies at 1284–1591; the sequence is WQGWGNLRLK…QKKYYNAMKK (308 aa). A helical transmembrane segment spans residues 1297 to 1320; the sequence is LIENKYFETAVITMILMSSLALAL. The Extracellular portion of the chain corresponds to 1321–1334; sequence EDVHLPQRPILQDI. The helical transmembrane segment at 1335–1359 threads the bilayer; the sequence is LYYMDRIFTVIFFLEMLIKWLALGF. Topologically, residues 1360–1365 are cytoplasmic; the sequence is KVYFTN. A helical membrane pass occupies residues 1366 to 1387; that stretch reads AWCWLDFVIVMVSLINFVASLV. The Extracellular segment spans residues 1388–1391; the sequence is GAGG. Residues 1392 to 1413 form a helical; Voltage-sensor membrane-spanning segment; the sequence is IQAFKTMRTLRALRPLRAMSRM. Residues 1414–1432 are Cytoplasmic-facing; it reads QGMRVVVNALVQAIPSIFN. The helical transmembrane segment at 1433–1454 threads the bilayer; it reads VLLVCLIFWLIFAIMGVQLFAG. Residues 1455-1495 are Extracellular-facing; sequence KYFKCEDMNGTKLSHEIIPNRNACESENYTWVNSAMNFDHV. N-linked (GlcNAc...) asparagine glycans are attached at residues Asn-1463 and Asn-1482. The pore-forming intramembrane region spans 1496 to 1517; that stretch reads GNAYLCLFQVATFKGWIQIMND. Topologically, residues 1518 to 1533 are extracellular; it reads AIDSREVDKQPIRETN. The chain crosses the membrane as a helical span at residues 1534–1560; that stretch reads IYMYLYFVFFIIFGSFFTLNLFIGVII. Topologically, residues 1561 to 1614 are cytoplasmic; it reads DNFNEQKKKAGGSLEMFMTEDQKKYYNAMKKMGSKKPLKAIPRPRWRPQAIVFE. The stretch at 1601 to 1862 is one IV repeat; it reads IPRPRWRPQA…NMYIAVILEN (262 aa). The helical transmembrane segment at 1615-1638 threads the bilayer; that stretch reads IVTDKKFDIIIMLFIGLNMFTMTL. The Extracellular segment spans residues 1639–1649; sequence DRYDASDTYNA. The helical transmembrane segment at 1650 to 1673 threads the bilayer; sequence VLDYLNAIFVVIFSSECLLKIFAL. At 1674–1679 the chain is on the cytoplasmic side; that stretch reads RYHYFI. The chain crosses the membrane as a helical span at residues 1680–1703; sequence EPWNLFDVVVVILSILGLVLSDII. The Extracellular segment spans residues 1704–1713; sequence EKYFVSPTLL. Residues 1714-1735 traverse the membrane as a helical; Voltage-sensor segment; it reads RVVRVAKVGRVLRLVKGAKGIR. Over 1736–1750 the chain is Cytoplasmic; sequence TLLFALAMSLPALFN. A helical membrane pass occupies residues 1751 to 1773; sequence ICLLLFLVMFIFAIFGMSFFMHV. Residues 1774 to 1787 lie on the Extracellular side of the membrane; sequence KEKSGINDVYNFKT. Positions 1788–1810 form an intramembrane region, pore-forming; the sequence is FGQSMILLFQMSTSAGWDGVLDA. Topologically, residues 1811 to 1835 are extracellular; the sequence is IINEEACDPPDNDKGYPGNCGSATV. A helical membrane pass occupies residues 1836–1860; that stretch reads GITFLLSYLVISFLIVINMYIAVIL. At 1861–2131 the chain is on the cytoplasmic side; sequence ENYSQATEDV…PSITSRTADV (271 aa). The 36-residue stretch at 1877–1912 folds into the EF-hand domain; that stretch reads DDYDMYYEIWQQFDPEGTQYIRYDQLSEFLDVLEPP. The interval 2001–2096 is disordered; it reads HKARGEGGGS…GSPGAGSAGR (96 aa). Acidic residues predominate over residues 2021 to 2035; it reads GDPDAGDPAPDEATD. Residues 2068-2088 show a composition bias toward low complexity; it reads AAAAAAAAAAAAAAGTTTAGS.

The protein belongs to the sodium channel (TC 1.A.1.10) family. Para subfamily.

It localises to the cell membrane. Functionally, mediates the voltage-dependent sodium ion permeability of excitable membranes. Assuming opened or closed conformations in response to the voltage difference across the membrane, the protein forms a sodium-selective channel through which Na(+) ions may pass in accordance with their electrochemical gradient. The protein is Sodium channel protein para (para) of Drosophila melanogaster (Fruit fly).